A 251-amino-acid polypeptide reads, in one-letter code: Probable phosphatase Sputcn32_1369 (251 aa).

Zn(2+)-binding residues include histidine 8, histidine 10, histidine 16, histidine 41, glutamate 74, histidine 102, histidine 132, aspartate 193, and histidine 195.

Belongs to the PHP family. Requires Zn(2+) as cofactor.

This is Probable phosphatase Sputcn32_1369 from Shewanella putrefaciens (strain CN-32 / ATCC BAA-453).